Here is a 334-residue protein sequence, read N- to C-terminus: Ornithine carbamoyltransferase subunit I (334 aa).

Carbamoyl phosphate contacts are provided by residues 56–59, Q83, R107, and 134–137; these read STRT and HPTQ. Residues N168, D232, and 236–237 contribute to the L-ornithine site; that span reads SM. C274 is a binding site for Zn(2+). Residues 274–275 and R320 contribute to the carbamoyl phosphate site; that span reads CL.

Belongs to the aspartate/ornithine carbamoyltransferase superfamily. OTCase family. As to quaternary structure, in E.coli strain K12, trimer of identical or non-identical chains are composed of ArgI (I) and/or ArgF (F). The trimer has the following composition: FFI, FFF, FII, III. E.coli strains B and W, which are known to contain only ArgI, produce only a trimer of identical chains (III).

The protein localises to the cytoplasm. It catalyses the reaction carbamoyl phosphate + L-ornithine = L-citrulline + phosphate + H(+). It functions in the pathway amino-acid biosynthesis; L-arginine biosynthesis; L-arginine from L-ornithine and carbamoyl phosphate: step 1/3. Its activity is regulated as follows. Reversely inhibited by N-(N-Sulfodiaminophosphinyl)-L-ornithine. Zinc is an allosteric regulator of the substrate-bound enzyme and a competitive inhibitor of the free enzyme. Functionally, reversibly catalyzes the transfer of the carbamoyl group from carbamoyl phosphate (CP) to the N(epsilon) atom of ornithine (ORN) to produce L-citrulline, which is a substrate for argininosuccinate synthetase, the enzyme involved in the final step in arginine biosynthesis. The chain is Ornithine carbamoyltransferase subunit I from Escherichia coli (strain K12).